The sequence spans 72 residues: Translation initiation factor IF-1 (72 aa).

Residues 1–72 enclose the S1-like domain; that stretch reads MAKEDVIEVE…NRGRIIYRFK (72 aa).

This sequence belongs to the IF-1 family. In terms of assembly, component of the 30S ribosomal translation pre-initiation complex which assembles on the 30S ribosome in the order IF-2 and IF-3, IF-1 and N-formylmethionyl-tRNA(fMet); mRNA recruitment can occur at any time during PIC assembly.

It is found in the cytoplasm. Its function is as follows. One of the essential components for the initiation of protein synthesis. Stabilizes the binding of IF-2 and IF-3 on the 30S subunit to which N-formylmethionyl-tRNA(fMet) subsequently binds. Helps modulate mRNA selection, yielding the 30S pre-initiation complex (PIC). Upon addition of the 50S ribosomal subunit IF-1, IF-2 and IF-3 are released leaving the mature 70S translation initiation complex. This Syntrophomonas wolfei subsp. wolfei (strain DSM 2245B / Goettingen) protein is Translation initiation factor IF-1.